Consider the following 359-residue polypeptide: DNA polymerase IV (359 aa).

The UmuC domain maps to 7 to 188; that stretch reads IIHIDMDAFY…LPIGKFFGVG (182 aa). Mg(2+) contacts are provided by D11 and D106. E107 is an active-site residue.

It belongs to the DNA polymerase type-Y family. In terms of assembly, monomer. It depends on Mg(2+) as a cofactor.

It is found in the cytoplasm. The catalysed reaction is DNA(n) + a 2'-deoxyribonucleoside 5'-triphosphate = DNA(n+1) + diphosphate. Poorly processive, error-prone DNA polymerase involved in untargeted mutagenesis. Copies undamaged DNA at stalled replication forks, which arise in vivo from mismatched or misaligned primer ends. These misaligned primers can be extended by PolIV. Exhibits no 3'-5' exonuclease (proofreading) activity. May be involved in translesional synthesis, in conjunction with the beta clamp from PolIII. The chain is DNA polymerase IV from Clostridium perfringens (strain SM101 / Type A).